The primary structure comprises 139 residues: ATP synthase epsilon chain (139 aa).

Belongs to the ATPase epsilon chain family. F-type ATPases have 2 components, CF(1) - the catalytic core - and CF(0) - the membrane proton channel. CF(1) has five subunits: alpha(3), beta(3), gamma(1), delta(1), epsilon(1). CF(0) has three main subunits: a, b and c.

The protein resides in the cell inner membrane. Functionally, produces ATP from ADP in the presence of a proton gradient across the membrane. The protein is ATP synthase epsilon chain of Pseudomonas putida (strain GB-1).